The chain runs to 101 residues: Urease subunit beta (101 aa).

The protein belongs to the urease beta subunit family. In terms of assembly, heterotrimer of UreA (gamma), UreB (beta) and UreC (alpha) subunits. Three heterotrimers associate to form the active enzyme.

It is found in the cytoplasm. It catalyses the reaction urea + 2 H2O + H(+) = hydrogencarbonate + 2 NH4(+). It participates in nitrogen metabolism; urea degradation; CO(2) and NH(3) from urea (urease route): step 1/1. The protein is Urease subunit beta of Nostoc punctiforme (strain ATCC 29133 / PCC 73102).